A 209-amino-acid polypeptide reads, in one-letter code: Rac-like GTP-binding protein ARAC7 (209 aa).

GTP is bound at residue 13–20 (GDGAVGKT). The Effector region signature appears at 35-43 (YIPTVFDNF). Residues 60–64 (DTAGQ) and 118–121 (TKLD) each bind GTP. S-palmitoyl cysteine attachment occurs at residues cysteine 196, cysteine 203, and cysteine 206.

It belongs to the small GTPase superfamily. Rho family. Post-translationally, although this sequence has a C-terminal -CXXX, it is palmitoylated at Cys-206, rather than prenylated.

It is found in the membrane. Its function is as follows. Acts as a negative regulator of abscisic acid (ABA) responses. This Arabidopsis thaliana (Mouse-ear cress) protein is Rac-like GTP-binding protein ARAC7 (ARAC7).